A 201-amino-acid polypeptide reads, in one-letter code: Ras-related protein Rab-1C (201 aa).

The interval 1–20 (MGCSPSKEGNGSFSSTSTSF) is disordered. G2 carries N-myristoyl glycine lipidation. The S-palmitoyl cysteine moiety is linked to residue C3. Residues 40 to 48 (GDSGVGKSC), 58 to 65 (FTDSYIST), 88 to 92 (DTAGQ), 146 to 149 (NKCD), and 176 to 178 (SAK) each bind GTP. The Effector region motif lies at 62–70 (YISTIGVDF).

The protein belongs to the small GTPase superfamily. Rab family. Although this sequence lacks the C-terminal cysteine motifs subject to isoprenylation in other Rab proteins, it does have N-terminal myristoylation and S-palmitoylation sequence motifs.

The protein is Ras-related protein Rab-1C (Rab1C) of Dictyostelium discoideum (Social amoeba).